Consider the following 573-residue polypeptide: 2-succinyl-5-enolpyruvyl-6-hydroxy-3-cyclohexene-1-carboxylate synthase (573 aa).

Belongs to the TPP enzyme family. MenD subfamily. As to quaternary structure, homodimer. It depends on Mg(2+) as a cofactor. Requires Mn(2+) as cofactor. Thiamine diphosphate is required as a cofactor.

The enzyme catalyses isochorismate + 2-oxoglutarate + H(+) = 5-enolpyruvoyl-6-hydroxy-2-succinyl-cyclohex-3-ene-1-carboxylate + CO2. It participates in quinol/quinone metabolism; 1,4-dihydroxy-2-naphthoate biosynthesis; 1,4-dihydroxy-2-naphthoate from chorismate: step 2/7. It functions in the pathway quinol/quinone metabolism; menaquinone biosynthesis. Functionally, catalyzes the thiamine diphosphate-dependent decarboxylation of 2-oxoglutarate and the subsequent addition of the resulting succinic semialdehyde-thiamine pyrophosphate anion to isochorismate to yield 2-succinyl-5-enolpyruvyl-6-hydroxy-3-cyclohexene-1-carboxylate (SEPHCHC). This is 2-succinyl-5-enolpyruvyl-6-hydroxy-3-cyclohexene-1-carboxylate synthase from Shewanella baltica (strain OS195).